Here is a 981-residue protein sequence, read N- to C-terminus: Amidohydrolase tasK (981 aa).

The segment at 1 to 36 is disordered; sequence MDDQKGPLPPYTPTATAPPPASMRQRRPPGRRRALR. The segment covering 7-21 has biased composition (pro residues); sequence PLPPYTPTATAPPPA. Residues 24–36 are compositionally biased toward basic residues; that stretch reads RQRRPPGRRRALR. The chain crosses the membrane as a helical span at residues 40-57; the sequence is TVRVLALACLAFVVLAQW. The interval 86–107 is disordered; that stretch reads LRVRPQDPAGPGRSKNDRYLDG. Positions 187 and 189 each coordinate Fe(2+). His187 and His189 together coordinate Zn(2+). A glycan (N-linked (GlcNAc...) asparagine) is linked at Asn407. The disordered stretch occupies residues 819–838; the sequence is KKQQKQQQQQQQQQQQQHGT. Positions 823-835 are enriched in low complexity; that stretch reads KQQQQQQQQQQQQ. N-linked (GlcNAc...) asparagine glycosylation occurs at Asn891.

It belongs to the metallo-dependent hydrolases superfamily. Fe(2+) is required as a cofactor. Requires Mn(2+) as cofactor. The cofactor is Zn(2+).

The protein localises to the membrane. In terms of biological role, amidohydrolase; part of the gene cluster that mediates the biosynthesis of the tetramic acids Sch210971 and Sch210972, potential anti-HIV fungal natural product that contain a decalin core. The PKS module of tasS together with the enoylreductase tasC catalyze the formation of the polyketide unit which is then conjugated to 4-hydroxyl-4-methyl glutamate (HMG) by the condensation domain of the tasS NRPS module. One unique structural feature of Sch210971 and Sch210972 is the tetramic acid motif proposed to be derived from the non-proteinogenic amino acid HMG, by a Dieckmann-type condensation catalyzed by the reductase domain of tasS. The aldolase tasA catalyzes the aldol condensation of 2 molecules of pyruvic acid to yield the intermediate 4-hydroxyl-4-methyl-2-oxoglutarate (HMOG), which can then be stereoselectively transaminated, may be by tasG, to form HMG. The Diels-Alderase tas3 then uses the Dieckmann product of tasS as substrate and catalyzes the Diels-Alder cycloaddition to form the decalin ring of Sch210971 and Sch210972. This Hapsidospora irregularis protein is Amidohydrolase tasK.